The following is a 313-amino-acid chain: Nucleoside diphosphate-linked moiety X motif 6 (313 aa).

One can recognise a Nudix hydrolase domain in the interval 138–270 (THQVGVAGAV…TSRVARLLLY (133 aa)).

This sequence belongs to the Nudix hydrolase family. As to quaternary structure, monomer and homodimer.

It is found in the cytoplasm. The protein localises to the nucleus. The protein resides in the mitochondrion. In terms of biological role, may contribute to the regulation of cell proliferation. This is Nucleoside diphosphate-linked moiety X motif 6 (Nudt6) from Mus musculus (Mouse).